We begin with the raw amino-acid sequence, 338 residues long: Ketol-acid reductoisomerase (NADP(+)) (338 aa).

Residues 1 to 181 (MKVFYDKDCD…GGGRTGIIET (181 aa)) enclose the KARI N-terminal Rossmann domain. Residues 24 to 27 (YGSQ), R47, S50, T52, and 82 to 85 (DEFQ) each bind NADP(+). The active site involves H107. G133 is a binding site for NADP(+). The KARI C-terminal knotted domain maps to 182–327 (TFKDETETDL…EKLRSMMPWI (146 aa)). Mg(2+) is bound by residues D190, E194, E226, and E230. S251 serves as a coordination point for substrate.

The protein belongs to the ketol-acid reductoisomerase family. Mg(2+) serves as cofactor.

The catalysed reaction is (2R)-2,3-dihydroxy-3-methylbutanoate + NADP(+) = (2S)-2-acetolactate + NADPH + H(+). The enzyme catalyses (2R,3R)-2,3-dihydroxy-3-methylpentanoate + NADP(+) = (S)-2-ethyl-2-hydroxy-3-oxobutanoate + NADPH + H(+). The protein operates within amino-acid biosynthesis; L-isoleucine biosynthesis; L-isoleucine from 2-oxobutanoate: step 2/4. It functions in the pathway amino-acid biosynthesis; L-valine biosynthesis; L-valine from pyruvate: step 2/4. In terms of biological role, involved in the biosynthesis of branched-chain amino acids (BCAA). Catalyzes an alkyl-migration followed by a ketol-acid reduction of (S)-2-acetolactate (S2AL) to yield (R)-2,3-dihydroxy-isovalerate. In the isomerase reaction, S2AL is rearranged via a Mg-dependent methyl migration to produce 3-hydroxy-3-methyl-2-ketobutyrate (HMKB). In the reductase reaction, this 2-ketoacid undergoes a metal-dependent reduction by NADPH to yield (R)-2,3-dihydroxy-isovalerate. The chain is Ketol-acid reductoisomerase (NADP(+)) from Pseudomonas syringae pv. tomato (strain ATCC BAA-871 / DC3000).